Here is a 152-residue protein sequence, read N- to C-terminus: uncharacterized protein (152 aa).

The next 4 membrane-spanning stretches (helical) occupy residues 2-22 (ENLI…LSFL), 26-46 (FITF…HLIE), 92-112 (VVPI…FILL), and 128-148 (YIIT…YFLK).

It localises to the membrane. This is an uncharacterized protein from Acanthamoeba polyphaga mimivirus (APMV).